Reading from the N-terminus, the 225-residue chain is NAD(P)H-hydrate epimerase (225 aa).

The YjeF N-terminal domain occupies 9–209 (MQTIDNYTVE…DIGLLTPQDF (201 aa)). 57 to 61 (NNGAD) lines the (6S)-NADPHX pocket. K(+)-binding residues include Asn58 and Asp119. (6S)-NADPHX-binding positions include 123-129 (GTGLNNL) and Asp152. Thr155 is a binding site for K(+).

Belongs to the NnrE/AIBP family. Requires K(+) as cofactor.

The catalysed reaction is (6R)-NADHX = (6S)-NADHX. It catalyses the reaction (6R)-NADPHX = (6S)-NADPHX. Functionally, catalyzes the epimerization of the S- and R-forms of NAD(P)HX, a damaged form of NAD(P)H that is a result of enzymatic or heat-dependent hydration. This is a prerequisite for the S-specific NAD(P)H-hydrate dehydratase to allow the repair of both epimers of NAD(P)HX. The protein is NAD(P)H-hydrate epimerase of Leuconostoc kimchii (strain IMSNU 11154 / KCTC 2386 / IH25).